The following is a 408-amino-acid chain: Alpha-2Da adrenergic receptor (408 aa).

Over 1–30 (MSVTPTANSTEEAANITASPRLWPYTEPAS) the chain is Extracellular. 2 N-linked (GlcNAc...) asparagine glycosylation sites follow: asparagine 8 and asparagine 15. Residues 31–55 (AIIILVVSLIILLTIVGNVLVIVAV) form a helical membrane-spanning segment. Topologically, residues 56-67 (LTSRALRAPQNL) are cytoplasmic. The chain crosses the membrane as a helical span at residues 68–93 (FLVSLACADILVATLVIPFSLANEIM). Residues 94–103 (GYWYFGSTWC) lie on the Extracellular side of the membrane. Residues cysteine 103 and cysteine 176 are joined by a disulfide bond. Residues 104–126 (AFYLALDVLFCTSSIVHLCAISL) traverse the membrane as a helical segment. Over 127 to 147 (DRYWSVTKAVRYNLKRTPRRI) the chain is Cytoplasmic. The helical transmembrane segment at 148–170 (KCMIAVVWLISAVISFPPLIMTK) threads the bilayer. Over 171–181 (HDEKECLINDE) the chain is Extracellular. Residues 182-205 (TWYILSSCAVSFFAPGLIMITVYC) traverse the membrane as a helical segment. At 206–332 (KIYRVAKQRS…QMREKRFTFV (127 aa)) the chain is on the cytoplasmic side. Residues 242–306 (FEKESPSSNS…SCRVSWAAHQ (65 aa)) form a disordered region. Residues 260 to 270 (ELDDIDLEESA) show a composition bias toward acidic residues. Residues 277-286 (RGSRFSKRRR) are compositionally biased toward basic residues. Residues 333–356 (LAVVMGVFVLCWFPFFFTYSLQAV) form a helical membrane-spanning segment. At 357 to 369 (CGERCGPPEALFK) the chain is on the extracellular side. The chain crosses the membrane as a helical span at residues 370-390 (LFFWIGYCNSSVNPIIYTIFN). At 391-408 (RDFRKAFKKVVCWSAQRT) the chain is on the cytoplasmic side.

It belongs to the G-protein coupled receptor 1 family. Adrenergic receptor subfamily. ADRA2D sub-subfamily.

It is found in the cell membrane. Alpha-2 adrenergic receptors mediate the catecholamine-induced inhibition of adenylate cyclase through the action of G proteins. The order of potency for this receptor is dexmedetomidine &gt; norepinephrine &gt; epinephrine &gt; oxymetazoline. The polypeptide is Alpha-2Da adrenergic receptor (adra2da) (Danio rerio (Zebrafish)).